A 283-amino-acid polypeptide reads, in one-letter code: 4-diphosphocytidyl-2-C-methyl-D-erythritol kinase (283 aa).

Lys13 is a catalytic residue. Residue 96–106 (PMGGGIGGGSS) participates in ATP binding. Asp138 is an active-site residue.

This sequence belongs to the GHMP kinase family. IspE subfamily.

It catalyses the reaction 4-CDP-2-C-methyl-D-erythritol + ATP = 4-CDP-2-C-methyl-D-erythritol 2-phosphate + ADP + H(+). The protein operates within isoprenoid biosynthesis; isopentenyl diphosphate biosynthesis via DXP pathway; isopentenyl diphosphate from 1-deoxy-D-xylulose 5-phosphate: step 3/6. Its function is as follows. Catalyzes the phosphorylation of the position 2 hydroxy group of 4-diphosphocytidyl-2C-methyl-D-erythritol. The polypeptide is 4-diphosphocytidyl-2-C-methyl-D-erythritol kinase (Pseudomonas fluorescens (strain Pf0-1)).